Reading from the N-terminus, the 146-residue chain is VHLTDAEKNLVSGLWGKVNADAVGAEALGRLLVVTPWTQRFFEHFGDLSSASAVMNNPQVKAHGKKVIHSFADGLKHLDNLKGAFSSLSELHCDKLHVDPENFKLLGNMIIIVLSHDLGKDFTPSAQSAFHKVVAGVANALAHKYH.

An N-acetylvaline modification is found at Val-1. Positions His-2–His-146 constitute a Globin domain. His-63 contributes to the heme b binding site. The residue at position 82 (Lys-82) is an N6-acetyllysine. His-92 is a heme b binding site. At Cys-93 the chain carries S-nitrosocysteine. Lys-144 is subject to N6-acetyllysine.

It belongs to the globin family. As to quaternary structure, heterotetramer of two alpha chains and two beta chains. As to expression, red blood cells.

Involved in oxygen transport from the lung to the various peripheral tissues. This chain is Hemoglobin subunit beta (HBB), found in Mesocricetus brandti (Brandt's hamster).